We begin with the raw amino-acid sequence, 287 residues long: Outer membrane protein TP0453 (287 aa).

The first 24 residues, 1 to 24 (MIRRRYRGCTQGAWIVSVGMLFAS), serve as a signal peptide directing secretion. A lipid anchor (N-palmitoyl cysteine) is attached at Cys-25. Cys-25 carries the S-diacylglycerol cysteine lipid modification. Amphipathic helix stretches follow at residues 36 to 40 (PLGVV), 56 to 63 (ENLISRII), 69 to 77 (KADIKKIVD), 103 to 112 (YAFTNLIFSR), 155 to 162 (MSKMLSRL), 172 to 179 (PRFEKECT), 194 to 202 (GGHFITKLL), 240 to 250 (FPIQFLISRVL), and 270 to 279 (AERLASVISS).

In terms of assembly, a mix of monomer and dimers; may integrate into the membrane as a dimer. In terms of processing, palmitoylated upon expression of a fusion protein with first 46 residues fused to PhoA in E.coli.

It localises to the cell outer membrane. Its function is as follows. Might be involved in ligand transport, alters membrane permeability at acidic pH (4.0 to 5.5). Incubation of the non-lipidated form with lipid vesicles increases their permeability. The polypeptide is Outer membrane protein TP0453 (Treponema pallidum (strain Nichols)).